Consider the following 807-residue polypeptide: Glycerol-3-phosphate acyltransferase (807 aa).

An HXXXXD motif motif is present at residues 309 to 314 (CHRSHM).

Belongs to the GPAT/DAPAT family.

It is found in the cell inner membrane. The catalysed reaction is sn-glycerol 3-phosphate + an acyl-CoA = a 1-acyl-sn-glycero-3-phosphate + CoA. The protein operates within phospholipid metabolism; CDP-diacylglycerol biosynthesis; CDP-diacylglycerol from sn-glycerol 3-phosphate: step 1/3. This chain is Glycerol-3-phosphate acyltransferase, found in Aeromonas hydrophila subsp. hydrophila (strain ATCC 7966 / DSM 30187 / BCRC 13018 / CCUG 14551 / JCM 1027 / KCTC 2358 / NCIMB 9240 / NCTC 8049).